The sequence spans 509 residues: Maturase K (509 aa).

The protein belongs to the intron maturase 2 family. MatK subfamily.

The protein localises to the plastid. It is found in the chloroplast. In terms of biological role, usually encoded in the trnK tRNA gene intron. Probably assists in splicing its own and other chloroplast group II introns. The chain is Maturase K from Cicer arietinum (Chickpea).